The primary structure comprises 255 residues: tRNA (guanine-N(7)-)-methyltransferase (255 aa).

The segment at 1-29 is disordered; the sequence is MSDSDASRPSAIASDGPDAAGKHASGAPW. S-adenosyl-L-methionine is bound by residues E86, E111, D138, and D160. D160 is a catalytic residue. Substrate is bound by residues K164, D196, and 233–236; that span reads TRYE.

Belongs to the class I-like SAM-binding methyltransferase superfamily. TrmB family.

The catalysed reaction is guanosine(46) in tRNA + S-adenosyl-L-methionine = N(7)-methylguanosine(46) in tRNA + S-adenosyl-L-homocysteine. The protein operates within tRNA modification; N(7)-methylguanine-tRNA biosynthesis. Catalyzes the formation of N(7)-methylguanine at position 46 (m7G46) in tRNA. The polypeptide is tRNA (guanine-N(7)-)-methyltransferase (Ruegeria sp. (strain TM1040) (Silicibacter sp.)).